Here is a 517-residue protein sequence, read N- to C-terminus: FAD-dependent monooxygenase FUP4 (517 aa).

The N-terminal stretch at 1–19 (MRQSSTLTWTSVLLAPLAA) is a signal peptide. In terms of domain architecture, FAD-binding PCMH-type spans 75–246 (QALRPACLVH…TRFDLDLYDQ (172 aa)). The residue at position 112 (His-112) is a Pros-8alpha-FAD histidine. 3 N-linked (GlcNAc...) asparagine glycosylation sites follow: Asn-163, Asn-208, and Asn-346.

Belongs to the oxygen-dependent FAD-linked oxidoreductase family. FAD is required as a cofactor.

It functions in the pathway secondary metabolite biosynthesis; terpenoid biosynthesis. Functionally, FAD-dependent monooxygenase; part of the gene cluster that mediates the biosynthesis of the mycotoxin fusaproliferin (FUP) that belongs to the class of bicyclic sesterterpenoids. FUP4 catalyzes the oxidation of the hydroxy group at the C-16 position of preterpestacin III to a keto group, leading to the formation of (-)-terpestacin. The product of FUP1, preterpestacin I, might also serve as a substrate of FUP4 to yield oxo-preterpestacin I. The FUP biosynthetic pathway starts with the enzyme encoded by FUP1 that combines a C-terminal prenyltransferase domain responsible for the synthesis of geranylgeranyl diphosphate with the N-terminal terpene cyclase domain, to yield preterpestacin I. Preterpestacin I is then decorated by oxygenation steps that are catalyzed by two cytochrome P450 monooxygenases. First, FUP2 introduces a hydroxyl group at the C-24 position resulting in the formation of preterpestacin IIa. The second P450 monooxygenase catalyzes the hydroxylation at C-16 and C-17 of preterpestacin IIa, producing preterpestacin III. Subsequently, the FAD-dependent oxidoreductase FUP4 catalyzes the oxidation of the hydroxy group at the C-16 position to a keto group, leading to the formation of (-)-terpestacin, which is the immediate precursor of FUP. The final step in the proposed biosynthetic pathway is the addition of an acetyl group at the C-24 position of terpestacin, which is catalyzed by the acetyltransferase FUP5. In Fusarium proliferatum (strain ET1) (Orchid endophyte fungus), this protein is FAD-dependent monooxygenase FUP4.